Reading from the N-terminus, the 98-residue chain is U-megalopygitoxin(1)-Mo1 (98 aa).

A signal peptide spans 1–17 (MYRETFVFCVLLAVVSA).

It belongs to the caterpillar 1 family. Contains 4 disulfide bonds. As to expression, expressed by the venom apparatus.

The protein resides in the secreted. Probable toxin. The protein is U-megalopygitoxin(1)-Mo1 of Megalopyge opercularis (Southern flannel moth).